A 370-amino-acid polypeptide reads, in one-letter code: MSESPMFAANGMPKVNQGAEEDVRILGYDPLASPALLQVQIPATPTSLETAKRGRREAIDIITGKDDRVLVIVGPCSIHDLEAAQEYALRLKKLSDELKGDLSIIMRAYLEKPRTTVGWKGLINDPDVNNTFNINKGLQSARQLFVNLTNIGLPIGSEMLDTISPQYLADLVSFGAIGARTTESQLHRELASGLSFPVGFKNGTDGTLNVAVDACQAAAHSHHFMGVTKHGVAAITTTKGNEHCFVILRGGKKGTNYDAKSVAEAKAQLPAGSNGLMIDYSHGNSNKDFRNQPKVNDVVCEQIANGENAITGVMIESNINEGNQGIPAEGKAGLKYGVSITDACIGWETTEDVLRKLAAAVRQRREVNKK.

Ser2 is subject to N-acetylserine.

The protein belongs to the class-I DAHP synthase family.

The catalysed reaction is D-erythrose 4-phosphate + phosphoenolpyruvate + H2O = 7-phospho-2-dehydro-3-deoxy-D-arabino-heptonate + phosphate. Its pathway is metabolic intermediate biosynthesis; chorismate biosynthesis; chorismate from D-erythrose 4-phosphate and phosphoenolpyruvate: step 1/7. With respect to regulation, inhibited by tyrosine. Functionally, stereospecific condensation of phosphoenolpyruvate (PEP) and D-erythrose-4-phosphate (E4P) giving rise to 3-deoxy-D-arabino-heptulosonate-7-phosphate (DAHP). In Saccharomyces cerevisiae (strain ATCC 204508 / S288c) (Baker's yeast), this protein is Phospho-2-dehydro-3-deoxyheptonate aldolase, tyrosine-inhibited (ARO4).